The following is an 86-amino-acid chain: Small ribosomal subunit protein uS17 (86 aa).

The protein belongs to the universal ribosomal protein uS17 family. As to quaternary structure, part of the 30S ribosomal subunit.

In terms of biological role, one of the primary rRNA binding proteins, it binds specifically to the 5'-end of 16S ribosomal RNA. The sequence is that of Small ribosomal subunit protein uS17 from Streptococcus pyogenes serotype M6 (strain ATCC BAA-946 / MGAS10394).